Reading from the N-terminus, the 1026-residue chain is Multidrug resistance protein MdtC (1026 aa).

A run of 12 helical transmembrane segments spans residues 12 to 32, 333 to 353, 360 to 380, 387 to 407, 431 to 451, 463 to 483, 528 to 548, 853 to 873, 875 to 895, 897 to 917, 953 to 973, and 984 to 1004; these read VATL…FRLL, EVEQ…FLFL, AIPA…MYLC, LSLM…IVVL, VGFT…PLLL, FAVT…TLTP, WVLL…ISIP, LLLI…LYES, VHPL…LLAL, WFGA…IGIV, PIMM…LTSG, and ITIV…TPVV.

This sequence belongs to the resistance-nodulation-cell division (RND) (TC 2.A.6) family. MdtC subfamily. Part of a tripartite efflux system composed of MdtA, MdtB and MdtC. MdtC forms a heteromultimer with MdtB.

The protein localises to the cell inner membrane. This Pectobacterium carotovorum subsp. carotovorum (strain PC1) protein is Multidrug resistance protein MdtC.